The primary structure comprises 444 residues: Serine--tRNA ligase (444 aa).

243–245 (TAE) is an L-serine binding site. 274 to 276 (RSE) serves as a coordination point for ATP. Residue glutamate 297 participates in L-serine binding. 361–364 (EISS) contacts ATP. Position 397 (serine 397) interacts with L-serine.

It belongs to the class-II aminoacyl-tRNA synthetase family. Type-1 seryl-tRNA synthetase subfamily. In terms of assembly, homodimer. The tRNA molecule binds across the dimer.

The protein resides in the cytoplasm. The catalysed reaction is tRNA(Ser) + L-serine + ATP = L-seryl-tRNA(Ser) + AMP + diphosphate + H(+). It catalyses the reaction tRNA(Sec) + L-serine + ATP = L-seryl-tRNA(Sec) + AMP + diphosphate + H(+). The protein operates within aminoacyl-tRNA biosynthesis; selenocysteinyl-tRNA(Sec) biosynthesis; L-seryl-tRNA(Sec) from L-serine and tRNA(Sec): step 1/1. In terms of biological role, catalyzes the attachment of serine to tRNA(Ser). Is also able to aminoacylate tRNA(Sec) with serine, to form the misacylated tRNA L-seryl-tRNA(Sec), which will be further converted into selenocysteinyl-tRNA(Sec). This chain is Serine--tRNA ligase, found in Acidobacterium capsulatum (strain ATCC 51196 / DSM 11244 / BCRC 80197 / JCM 7670 / NBRC 15755 / NCIMB 13165 / 161).